A 147-amino-acid chain; its full sequence is Protein MC014 (147 aa).

It is found in the host nucleus. The sequence is that of Protein MC014 (MC014) from Homo sapiens (Human).